The sequence spans 126 residues: Large ribosomal subunit protein bL20 (126 aa).

Belongs to the bacterial ribosomal protein bL20 family.

Functionally, binds directly to 23S ribosomal RNA and is necessary for the in vitro assembly process of the 50S ribosomal subunit. It is not involved in the protein synthesizing functions of that subunit. The chain is Large ribosomal subunit protein bL20 from Frankia casuarinae (strain DSM 45818 / CECT 9043 / HFP020203 / CcI3).